Reading from the N-terminus, the 330-residue chain is Beta-ketoacyl-[acyl-carrier-protein] synthase III (330 aa).

Catalysis depends on residues cysteine 115 and histidine 255. Residues 256 to 260 (QANFR) are ACP-binding. Asparagine 285 is an active-site residue.

It belongs to the thiolase-like superfamily. FabH family. Homodimer.

Its subcellular location is the cytoplasm. It carries out the reaction malonyl-[ACP] + acetyl-CoA + H(+) = 3-oxobutanoyl-[ACP] + CO2 + CoA. Its pathway is lipid metabolism; fatty acid biosynthesis. In terms of biological role, catalyzes the condensation reaction of fatty acid synthesis by the addition to an acyl acceptor of two carbons from malonyl-ACP. Catalyzes the first condensation reaction which initiates fatty acid synthesis and may therefore play a role in governing the total rate of fatty acid production. Possesses both acetoacetyl-ACP synthase and acetyl transacylase activities. Its substrate specificity determines the biosynthesis of branched-chain and/or straight-chain of fatty acids. In Helicobacter pylori (strain HPAG1), this protein is Beta-ketoacyl-[acyl-carrier-protein] synthase III.